Reading from the N-terminus, the 233-residue chain is 3,4-dihydroxy-2-butanone 4-phosphate synthase (233 aa).

Glu37 lines the Mg(2+) pocket. Glu37 lines the Mn(2+) pocket. Asp41 contacts D-ribulose 5-phosphate. Cys66 carries the S-glutathionyl cysteine modification. D-ribulose 5-phosphate is bound by residues Thr92 and 150-154 (RRGHT). A Mg(2+)-binding site is contributed by His153. Residue His153 coordinates Mn(2+).

Homodimer. It depends on Mg(2+) as a cofactor. Requires Mn(2+) as cofactor. S-glutathionylation is reversible and dependent on a glutaredoxin.

The enzyme catalyses D-ribulose 5-phosphate = (2S)-2-hydroxy-3-oxobutyl phosphate + formate + H(+). The protein operates within cofactor biosynthesis; riboflavin biosynthesis; 2-hydroxy-3-oxobutyl phosphate from D-ribulose 5-phosphate: step 1/1. Catalyzes the conversion of D-ribulose 5-phosphate to formate and 3,4-dihydroxy-2-butanone 4-phosphate. The polypeptide is 3,4-dihydroxy-2-butanone 4-phosphate synthase (RIB3) (Pyricularia oryzae (strain 70-15 / ATCC MYA-4617 / FGSC 8958) (Rice blast fungus)).